A 440-amino-acid chain; its full sequence is MGLGVSAEQPAGGAEGFHLHGVQENSPAQQAGLEPYFDFIITIGHSRLNKENDTLKALLKANVEKPVKLEVFNMKTMRVREVEVVPSNMWGGQGLLGASVRFCSFRRASEQVWHVLDVEPSSPAALAGLRPYTDYVVGSDQILQESEDFFTLIESHEGKPLKLMVYNSKSDSCREVTVTPNAAWGGEGSLGCGIGYGYLHRIPTQPPSYHKKPPGTPPPSALPLGAPPPDALPPGPTPEDSPSLETGSRQSDYMEALLQAPGSSMEDPLPGPGSPSHSAPDPDGLPHFMETPLQPPPPVQRVMDPGFLDVSGISLLDNSNASVWPSLPSSTELTTTAVSTSGPEDICSSSSSHERGGEATWSGSEFEVSFLDSPGAQAQADHLPQLTLPDSLTSAASPEDGLSAELLEAQAEEEPASTEGLDTGTEAEGLDSQAQISTTE.

A lipid anchor (N-myristoyl glycine) is attached at G2. PDZ GRASP-type domains lie at E15–F105 and Q111–L199. The segment at E15–G215 is GRASP. Residues H18, H20, and C103 each contribute to the Zn(2+) site. The essential for interaction with GOLGA2/GM130 stretch occupies residues L190–I202. Disordered regions lie at residues Q205 to S248, P261 to R301, and L327 to E440. Residues P214–E239 show a composition bias toward pro residues. T216 is subject to Phosphothreonine. A compositionally biased stretch (low complexity) spans L327–T336. Polar residues predominate over residues A337–S351. Phosphoserine is present on residues S362, S364, and S373.

This sequence belongs to the GORASP family. As to quaternary structure, homodimer. Forms higher-order oligomers under interphase but not mitotic conditions. Dimers of the protein on one membrane might be able to interact with dimers on another and so stack cisternae. Interacts with the C-terminus of GOLGA2/GM130 under both mitotic and non-mitotic conditions. The interaction is critical for the correct targeting of both proteins to the cis-Golgi. Interacts with TMED2 and TMED3. Post-translationally, phosphorylated by CDC2/B1 and PLK kinases during mitosis. Phosphorylation cycle correlates with the cisternal stacking cycle. Phosphorylation of the homodimer prevents the association of dimers into higher-order oligomers, leading to cisternal unstacking. Target for caspase-3 cleavage during apoptosis. The cleavage contributes to Golgi fragmentation and occurs very early in the execution phase of apoptosis. In terms of processing, myristoylated.

It is found in the golgi apparatus. The protein localises to the cis-Golgi network membrane. Its subcellular location is the endoplasmic reticulum-Golgi intermediate compartment membrane. Key structural protein of the Golgi apparatus. The membrane cisternae of the Golgi apparatus adhere to each other to form stacks, which are aligned side by side to form the Golgi ribbon. Acting in concert with GORASP2/GRASP55, is required for the formation and maintenance of the Golgi ribbon, and may be dispensable for the formation of stacks. However, other studies suggest that GORASP1 plays an important role in assembly and membrane stacking of the cisternae, and in the reassembly of Golgi stacks after breakdown during mitosis. Caspase-mediated cleavage of GORASP1 is required for fragmentation of the Golgi during apoptosis. Also mediates, via its interaction with GOLGA2/GM130, the docking of transport vesicles with the Golgi membranes. Mediates ER stress-induced unconventional (ER/Golgi-independent) trafficking of core-glycosylated CFTR to cell membrane. In Homo sapiens (Human), this protein is Golgi reassembly-stacking protein 1 (GORASP1).